Consider the following 352-residue polypeptide: Putative [LysW]-L-2-aminoadipate/[LysW]-L-glutamate phosphate reductase (352 aa).

Residues 10–13 (SGFT) and 34–36 (SRR) contribute to the NADP(+) site. Cys-151 is an active-site residue. Asn-319 is a binding site for NADP(+).

This sequence belongs to the NAGSA dehydrogenase family. Type 1 subfamily. LysY sub-subfamily.

Its subcellular location is the cytoplasm. The catalysed reaction is [amino-group carrier protein]-C-terminal-N-(1-carboxy-5-oxopentan-1-yl)-L-glutamine + phosphate + NADP(+) = [amino-group carrier protein]-C-terminal-N-(1-carboxy-5-phosphooxy-5-oxopentan-1-yl)-L-glutamine + NADPH + H(+). It carries out the reaction [amino-group carrier protein]-C-terminal-gamma-(L-glutamyl-5-semialdehyde)-L-glutamate + phosphate + NADP(+) = [amino-group carrier protein]-C-terminal-gamma-(5-phospho-L-glutamyl)-L-glutamate + NADPH + H(+). It participates in amino-acid biosynthesis; L-lysine biosynthesis via AAA pathway; L-lysine from L-alpha-aminoadipate (Thermus route): step 3/5. Its pathway is amino-acid biosynthesis; L-arginine biosynthesis. In terms of biological role, involved in both the arginine and lysine biosynthetic pathways. The sequence is that of Putative [LysW]-L-2-aminoadipate/[LysW]-L-glutamate phosphate reductase from Pyrobaculum islandicum (strain DSM 4184 / JCM 9189 / GEO3).